We begin with the raw amino-acid sequence, 102 residues long: Small ribosomal subunit protein uS10 (102 aa).

The protein belongs to the universal ribosomal protein uS10 family. In terms of assembly, part of the 30S ribosomal subunit.

Functionally, involved in the binding of tRNA to the ribosomes. This is Small ribosomal subunit protein uS10 from Streptococcus mutans serotype c (strain ATCC 700610 / UA159).